The primary structure comprises 179 residues: Low molecular weight phosphotyrosine protein phosphatase (179 aa).

Cys15 serves as the catalytic Nucleophile. Arg21 is an active-site residue. Asp148 serves as the catalytic Proton donor.

This sequence belongs to the low molecular weight phosphotyrosine protein phosphatase family.

It is found in the cytoplasm. The enzyme catalyses O-phospho-L-tyrosyl-[protein] + H2O = L-tyrosyl-[protein] + phosphate. It carries out the reaction a phosphate monoester + H2O = an alcohol + phosphate. Its function is as follows. Acts on tyrosine phosphorylated proteins, low-MW aryl phosphates and natural and synthetic acyl phosphates. This is Low molecular weight phosphotyrosine protein phosphatase (acp1) from Dictyostelium discoideum (Social amoeba).